The chain runs to 941 residues: Bifunctional glutamine synthetase adenylyltransferase/adenylyl-removing enzyme (941 aa).

The segment at Met-1–Pro-437 is adenylyl removase. The interval Pro-444–Leu-941 is adenylyl transferase.

It belongs to the GlnE family. Mg(2+) serves as cofactor.

The catalysed reaction is [glutamine synthetase]-O(4)-(5'-adenylyl)-L-tyrosine + phosphate = [glutamine synthetase]-L-tyrosine + ADP. The enzyme catalyses [glutamine synthetase]-L-tyrosine + ATP = [glutamine synthetase]-O(4)-(5'-adenylyl)-L-tyrosine + diphosphate. Its function is as follows. Involved in the regulation of glutamine synthetase GlnA, a key enzyme in the process to assimilate ammonia. When cellular nitrogen levels are high, the C-terminal adenylyl transferase (AT) inactivates GlnA by covalent transfer of an adenylyl group from ATP to specific tyrosine residue of GlnA, thus reducing its activity. Conversely, when nitrogen levels are low, the N-terminal adenylyl removase (AR) activates GlnA by removing the adenylyl group by phosphorolysis, increasing its activity. The regulatory region of GlnE binds the signal transduction protein PII (GlnB) which indicates the nitrogen status of the cell. This is Bifunctional glutamine synthetase adenylyltransferase/adenylyl-removing enzyme from Xanthomonas oryzae pv. oryzae (strain MAFF 311018).